The primary structure comprises 158 residues: 6,7-dimethyl-8-ribityllumazine synthase (158 aa).

5-amino-6-(D-ribitylamino)uracil contacts are provided by residues F24, A58–E60, and A82–I84. Position 87 to 88 (G87 to T88) interacts with (2S)-2-hydroxy-3-oxobutyl phosphate. H90 acts as the Proton donor in catalysis. F115 contacts 5-amino-6-(D-ribitylamino)uracil. (2S)-2-hydroxy-3-oxobutyl phosphate is bound at residue R129.

Belongs to the DMRL synthase family. In terms of assembly, forms an icosahedral capsid composed of 60 subunits, arranged as a dodecamer of pentamers.

The catalysed reaction is (2S)-2-hydroxy-3-oxobutyl phosphate + 5-amino-6-(D-ribitylamino)uracil = 6,7-dimethyl-8-(1-D-ribityl)lumazine + phosphate + 2 H2O + H(+). It functions in the pathway cofactor biosynthesis; riboflavin biosynthesis; riboflavin from 2-hydroxy-3-oxobutyl phosphate and 5-amino-6-(D-ribitylamino)uracil: step 1/2. Functionally, catalyzes the formation of 6,7-dimethyl-8-ribityllumazine by condensation of 5-amino-6-(D-ribitylamino)uracil with 3,4-dihydroxy-2-butanone 4-phosphate. This is the penultimate step in the biosynthesis of riboflavin. The polypeptide is 6,7-dimethyl-8-ribityllumazine synthase (Pseudomonas putida (strain GB-1)).